Here is a 445-residue protein sequence, read N- to C-terminus: Hydroxymethylglutaryl-CoA synthase (445 aa).

Asp31 is a (3S)-3-hydroxy-3-methylglutaryl-CoA binding site. The active-site Proton donor/acceptor is the Glu83. Cys120, Thr163, Ser211, His244, Lys253, Asn328, and Ser364 together coordinate (3S)-3-hydroxy-3-methylglutaryl-CoA. The active-site Acyl-thioester intermediate is the Cys120. The active-site Proton donor/acceptor is His244.

It belongs to the thiolase-like superfamily. HMG-CoA synthase family.

The enzyme catalyses acetoacetyl-CoA + acetyl-CoA + H2O = (3S)-3-hydroxy-3-methylglutaryl-CoA + CoA + H(+). The protein operates within metabolic intermediate biosynthesis; (R)-mevalonate biosynthesis; (R)-mevalonate from acetyl-CoA: step 2/3. With respect to regulation, in contrast to bacterial and eukaryotic HMG-CoA synthases, is insensitive to feedback substrate inhibition by acetoacetyl-CoA. Enzymatic activity is inhibited by hymeglusin, which also blocks the propagation of H.volcanii cells in vivo, indicating the critical role that the mevalonate pathway plays in isoprenoid biosynthesis by these archaea. In terms of biological role, catalyzes the condensation of acetyl-CoA with acetoacetyl-CoA to form 3-hydroxy-3-methylglutaryl-CoA (HMG-CoA). Functions in the mevalonate (MVA) pathway leading to isopentenyl diphosphate (IPP), a key precursor for the biosynthesis of isoprenoid compounds such as archaeal membrane lipids. This is Hydroxymethylglutaryl-CoA synthase (hmgB) from Haloferax volcanii (strain ATCC 29605 / DSM 3757 / JCM 8879 / NBRC 14742 / NCIMB 2012 / VKM B-1768 / DS2) (Halobacterium volcanii).